The primary structure comprises 291 residues: MAATLGKTIVATGASSGLGFESVKQLLQQSQPYKFIIGARDLKTTQAAFDQVQYDAKTHSVSILPLDLADLRTVKPFAQQTLEALDQDKLDILFLNAGMNKAATGPGLHGSKWCEAYVVNHLSQHYLTQLLRPKLSASHSRVVVVSSGLIRAVKEADIEAFETTLKADSGADGFKVYHASKFVQFLGAHWWRRQLGTSATVLAVSPGLVIGTGLGRHLDTQPNLDHIPDKVTVDKGAKSLLRAFDCNDIPEDPEQIFLTSWGEWWPKDVYSLSLDKSLQDRWCPSQEDIEA.

Leucine 18, aspartate 67, asparagine 96, tyrosine 177, lysine 181, and valine 209 together coordinate NADP(+). The active-site Proton acceptor is tyrosine 177. The Lowers pKa of active site Tyr role is filled by lysine 181.

Belongs to the short-chain dehydrogenases/reductases (SDR) family.

It functions in the pathway secondary metabolite biosynthesis. Short-chain dehydrogenase/reductase; part of the gene cluster that mediates the biosynthesis of dibenzodioxocinones such as pestalotiollide B, a novel class of inhibitors against cholesterol ester transfer protein (CEPT). The biosynthesis initiates from condensation of acetate and malonate units catalyzed by the non-reducing PKS pks8/GME11356. Pks8/GME11356 lacks a thioesterase (TE) domain, which is important to the cyclizing of the third ring of atrochrysone carboxylic acid, and the esterase GME11355 might play the role of TE and catalyzes the cyclization reaction of the C ring. The lactamase-like protein GME11357 (or other beta-lactamases in Pestalotiopsis microspora) probably hydrolyzes the thioester bond between the ACP of pks8/GME11356 and the intermediate to release atrochrysone carboxylic acid, which is spontaneously dehydrates to form endocrocin anthrone. Endocrocin anthrone is further converted to emodin via the endocrocin intermediate. Emodin is then oxidized by several enzymes such as the Baeyer-Villiger oxidase GME11358, the oxidoreductase GME11367, the short chain dehydrogenase/reductase GME11373, as well as by other oxidoreductases from the cluster, to modify the A and C rings and open the B ring, and finally yield monodictyphenone. The prenyltransferase GME11375 may catalyze the addition reaction between the C5 side chains and the carbon bone of dibenzodioxocinones. The remaining biochemical reactions to the final product dibenzodioxocinones should be methylation catalyzed by methyltransferase GME11366 and reduction and lactonization reaction catalyzed by a series of oxidordeuctases. The sequence is that of Short-chain dehydrogenase/reductase GME11359 from Pestalotiopsis microspora.